A 237-amino-acid polypeptide reads, in one-letter code: Uridylate kinase (237 aa).

11-14 (KLSG) provides a ligand contact to ATP. The interval 18-23 (GGGGIG) is involved in allosteric activation by GTP. Glycine 52 is a binding site for UMP. ATP contacts are provided by glycine 53 and arginine 57. UMP contacts are provided by residues aspartate 72 and 133 to 140 (SGMPYFST). ATP is bound by residues glutamine 161, tyrosine 167, and aspartate 170.

This sequence belongs to the UMP kinase family. As to quaternary structure, homohexamer.

The protein localises to the cytoplasm. The catalysed reaction is UMP + ATP = UDP + ADP. Its pathway is pyrimidine metabolism; CTP biosynthesis via de novo pathway; UDP from UMP (UMPK route): step 1/1. Its activity is regulated as follows. Allosterically activated by GTP. Inhibited by UTP. Catalyzes the reversible phosphorylation of UMP to UDP. In Cutibacterium acnes (strain DSM 16379 / KPA171202) (Propionibacterium acnes), this protein is Uridylate kinase.